We begin with the raw amino-acid sequence, 449 residues long: Phosphoglucosamine mutase (449 aa).

Ser-100 (phosphoserine intermediate) is an active-site residue. Mg(2+)-binding residues include Ser-100, Asp-241, Asp-243, and Asp-245. Position 100 is a phosphoserine (Ser-100).

The protein belongs to the phosphohexose mutase family. Mg(2+) serves as cofactor. In terms of processing, activated by phosphorylation.

It catalyses the reaction alpha-D-glucosamine 1-phosphate = D-glucosamine 6-phosphate. In terms of biological role, catalyzes the conversion of glucosamine-6-phosphate to glucosamine-1-phosphate. In Clostridium botulinum (strain Kyoto / Type A2), this protein is Phosphoglucosamine mutase.